The chain runs to 205 residues: Holliday junction resolvase RecU (205 aa).

Residues 1-22 (MAINYPAGTRRRTAQAKNTMRT) are disordered. 4 residues coordinate Mg(2+): Thr90, Asp92, Asp105, and Gln124.

The protein belongs to the RecU family. Mg(2+) is required as a cofactor.

Its subcellular location is the cytoplasm. The catalysed reaction is Endonucleolytic cleavage at a junction such as a reciprocal single-stranded crossover between two homologous DNA duplexes (Holliday junction).. Its function is as follows. Endonuclease that resolves Holliday junction intermediates in genetic recombination. Cleaves mobile four-strand junctions by introducing symmetrical nicks in paired strands. Promotes annealing of linear ssDNA with homologous dsDNA. Required for DNA repair, homologous recombination and chromosome segregation. This Leuconostoc citreum (strain KM20) protein is Holliday junction resolvase RecU.